We begin with the raw amino-acid sequence, 528 residues long: Nucleoporin ASM4 (528 aa).

The stretch at 2-3 is one FG 1 repeat; it reads FG. Low complexity predominate over residues 23–50; it reads TTQMFQSQSQLQPQPQPQPQQQQQHLQF. Disordered stretches follow at residues 23-64 and 88-144; these read TTQM…FGNS and IKNG…SMNA. 2 stretches are compositionally biased toward polar residues: residues 51-64 and 97-108; these read NGSS…FGNS and QHGQGNNPSWVN. The stretch at 61 to 62 is one FG 2 repeat; sequence FG. Positions 110 to 125 are enriched in basic residues; it reads PKKRFTPHTVIRRKTT. A compositionally biased stretch (low complexity) spans 127 to 141; it reads QNSSSDINQNDDSSS. FG repeat units lie at residues 195–196, 274–275, and 291–292; these read FG. Positions 265–394 constitute an RRM Nup35-type domain; that stretch reads SSSLSAIIVF…IPYSKNAVEQ (130 aa). Residues Ser-458 and Ser-464 each carry the phosphoserine modification. Residues 490 to 510 are a coiled coil; sequence NLLRNLESKMRQQEAKYRNNE. Residues 523 to 524 form an FG 6 repeat; that stretch reads FG.

In terms of assembly, component of the nuclear pore complex (NPC). NPC constitutes the exclusive means of nucleocytoplasmic transport. NPCs allow the passive diffusion of ions and small molecules and the active, nuclear transport receptor-mediated bidirectional transport of macromolecules such as proteins, RNAs, ribonucleoparticles (RNPs), and ribosomal subunits across the nuclear envelope. Due to its 8-fold rotational symmetry, all subunits are present with 8 copies or multiples thereof. ASM4 may form a subcomplex with NUP53, NDC1, and NUP170. In terms of processing, phosphorylated by CDC28.

The protein localises to the nucleus. Its subcellular location is the nuclear pore complex. The protein resides in the nucleus membrane. Its function is as follows. Functions as a component of the nuclear pore complex (NPC). NPC components, collectively referred to as nucleoporins (NUPs), can play the role of both NPC structural components and of docking or interaction partners for transiently associated nuclear transport factors. Active directional transport is assured by both, a Phe-Gly (FG) repeat affinity gradient for these transport factors across the NPC and a transport cofactor concentration gradient across the nuclear envelope (GSP1 and GSP2 GTPases associated predominantly with GTP in the nucleus, with GDP in the cytoplasm). May have a mitosis control function. The chain is Nucleoporin ASM4 (ASM4) from Saccharomyces cerevisiae (strain ATCC 204508 / S288c) (Baker's yeast).